A 282-amino-acid chain; its full sequence is Bifunctional protein FolD 2 (282 aa).

Residues 164–166 (GRS) and Ser189 each bind NADP(+).

Belongs to the tetrahydrofolate dehydrogenase/cyclohydrolase family. As to quaternary structure, homodimer.

The catalysed reaction is (6R)-5,10-methylene-5,6,7,8-tetrahydrofolate + NADP(+) = (6R)-5,10-methenyltetrahydrofolate + NADPH. It catalyses the reaction (6R)-5,10-methenyltetrahydrofolate + H2O = (6R)-10-formyltetrahydrofolate + H(+). It participates in one-carbon metabolism; tetrahydrofolate interconversion. Catalyzes the oxidation of 5,10-methylenetetrahydrofolate to 5,10-methenyltetrahydrofolate and then the hydrolysis of 5,10-methenyltetrahydrofolate to 10-formyltetrahydrofolate. This chain is Bifunctional protein FolD 2, found in Lactobacillus johnsonii (strain CNCM I-12250 / La1 / NCC 533).